Reading from the N-terminus, the 448-residue chain is NADP-specific glutamate dehydrogenase (448 aa).

3 residues coordinate substrate: lysine 88, glutamine 109, and lysine 112. Lysine 124 acts as the Proton donor in catalysis. Glycine 163 contacts substrate. 2 residues coordinate NADP(+): threonine 207 and asparagine 238. Residue serine 381 coordinates substrate.

Belongs to the Glu/Leu/Phe/Val dehydrogenases family. Homohexamer.

The enzyme catalyses L-glutamate + NADP(+) + H2O = 2-oxoglutarate + NH4(+) + NADPH + H(+). In terms of biological role, catalyzes the reversible oxidative deamination of glutamate to alpha-ketoglutarate and ammonia. The polypeptide is NADP-specific glutamate dehydrogenase (gdhA) (Helicobacter pylori (strain ATCC 700392 / 26695) (Campylobacter pylori)).